We begin with the raw amino-acid sequence, 501 residues long: Glucan endo-1,3-beta-glucosidase 3 (501 aa).

A signal peptide spans 1–18 (MAALLLLFLFLFASSALS). Asparagine 88 and asparagine 107 each carry an N-linked (GlcNAc...) asparagine glycan. Catalysis depends on glutamate 116, which acts as the Proton donor. Residues asparagine 171 and asparagine 253 are each glycosylated (N-linked (GlcNAc...) asparagine). Glutamate 263 (nucleophile) is an active-site residue. N-linked (GlcNAc...) asparagine glycosylation is found at asparagine 295, asparagine 353, and asparagine 357. A disulfide bond links cysteine 361 and cysteine 424. 4 N-linked (GlcNAc...) asparagine glycosylation sites follow: asparagine 451, asparagine 456, asparagine 457, and asparagine 466. Serine 470 carries the GPI-anchor amidated serine lipid modification. Positions 471–501 (GCIPKYYHHPHASFGDLTLLSLLLIIALVFL) are cleaved as a propeptide — removed in mature form.

Belongs to the glycosyl hydrolase 17 family. In terms of processing, contains two additional disulfide bonds.

The protein localises to the cell membrane. It carries out the reaction Hydrolysis of (1-&gt;3)-beta-D-glucosidic linkages in (1-&gt;3)-beta-D-glucans.. This is Glucan endo-1,3-beta-glucosidase 3 from Arabidopsis thaliana (Mouse-ear cress).